The chain runs to 160 residues: uncharacterized protein (160 aa).

A helical membrane pass occupies residues 8 to 28; the sequence is LLFILVFISGFILFTVYSYTA.

The protein localises to the membrane. This is an uncharacterized protein from Escherichia coli (strain K12).